Consider the following 260-residue polypeptide: Indole-3-glycerol phosphate synthase (260 aa).

The protein belongs to the TrpC family.

It catalyses the reaction 1-(2-carboxyphenylamino)-1-deoxy-D-ribulose 5-phosphate + H(+) = (1S,2R)-1-C-(indol-3-yl)glycerol 3-phosphate + CO2 + H2O. The protein operates within amino-acid biosynthesis; L-tryptophan biosynthesis; L-tryptophan from chorismate: step 4/5. The chain is Indole-3-glycerol phosphate synthase from Ruminiclostridium cellulolyticum (strain ATCC 35319 / DSM 5812 / JCM 6584 / H10) (Clostridium cellulolyticum).